The primary structure comprises 148 residues: UPF0756 membrane protein YeaL (148 aa).

Helical transmembrane passes span 14–34 (ALGF…LIIV), 51–71 (LSIG…SGTL), 86–106 (LVAI…VTLM), and 121–141 (VLGV…AGLV).

It belongs to the UPF0756 family.

It localises to the cell membrane. The chain is UPF0756 membrane protein YeaL from Shigella dysenteriae serotype 1 (strain Sd197).